The sequence spans 459 residues: Hepatocyte nuclear factor 3-beta (459 aa).

The interval 14–93 (DWSSYYAEPE…AGAMAGMSGS (80 aa)) is transactivation domain 1. The Nuclear localization signal motif lies at 106–113 (LSPSLSPL). Threonine 156 bears the Phosphothreonine mark. The fork-head DNA-binding region spans 159-252 (KPPYSYISLI…FENGCYLRRQ (94 aa)). Residue serine 212 is modified to Phosphoserine. Residues 268–281 (GAASSGGKKTAPGS) are compositionally biased toward low complexity. The tract at residues 268 to 366 (GAASSGGKKT…PGLPPEAHLK (99 aa)) is disordered. Phosphoserine is present on serine 284. A compositionally biased stretch (polar residues) spans 295–311 (ASETPAGTESPHSSASP). Position 302 is a phosphothreonine (threonine 302). Residues serine 304, serine 307, serine 308, and serine 310 each carry the phosphoserine modification. Low complexity predominate over residues 340 to 353 (PGQQQQAAAHLLGP). The tract at residues 362–459 (EAHLKPEHHY…VYSRPIMNSS (98 aa)) is transactivation domain 2. Residues serine 438 and serine 459 each carry the phosphoserine modification.

In terms of assembly, binds DNA as a monomer. Binds TLE1. Interacts with FOXA1 and FOXA3. Interacts with PRKDC. Interacts with AKT1. Interacts with TET1; this interaction may recruit TET1 to specific genomic loci to mediate their demethylation. Post-translationally, phosphorylation on Thr-156 abolishes binding to target promoters and subsequent transcription activation upon insulin stimulation. As to expression, restricted mainly to endoderm-derived tissues (lung, liver, stomach, and small intestine). Expressed in epididymis with region-specific expression pattern: no expression is observed in initial segment, low expression in proximal caput, gradiently higher levels of expression in middle and distal caput and highest level in corpus and cauda (at protein level).

It is found in the nucleus. It localises to the cytoplasm. Transcription factor that is involved in embryonic development, establishment of tissue-specific gene expression and regulation of gene expression in differentiated tissues. Is thought to act as a 'pioneer' factor opening the compacted chromatin for other proteins through interactions with nucleosomal core histones and thereby replacing linker histones at target enhancer and/or promoter sites. Binds DNA with the consensus sequence 5'-[AC]A[AT]T[AG]TT[GT][AG][CT]T[CT]-3'. In embryonic development is required for notochord formation. Involved in the development of multiple endoderm-derived organ systems such as the liver, pancreas and lungs; Foxa1 and Foxa2 seem to have at least in part redundant roles. FOXA1 and FOXA2 are essential for hepatic specification. FOXA1 and FOXA2 are required for morphogenesis and cell differentiation during formation of the lung. FOXA1 and FOXA2 are involved in bile duct formation; they positively regulate the binding glucocorticoid receptor/NR3C1 to the IL6 promoter. FOXA1 and FOXA2 regulate multiple phases of midbrain dopaminergic neuron development; they regulate expression of NEUROG2 at the beginning of mDA neurogenesis and of NR4A2 and EN1 in immature mDA neurons. Modulates the transcriptional activity of nuclear hormone receptors; inhibits AR-mediated transcription from the LCN5 promoter. Binds to fibrinogen beta promoter and is involved in IL6-induced fibrinogen beta transcriptional activation. Originally described as a transcription activator for a number of liver genes such as AFP, albumin, tyrosine aminotransferase, PEPCK, etc. Interacts with the cis-acting regulatory regions of these genes. Involved in glucose homeostasis; regulates the expression of genes important for glucose sensing in pancreatic beta-cells and glucose homeostasis. In pancreatic beta cells activates transcription of potassium channel subunits KCNJ11 and ABCC8. Involved in regulation of fat metabolism; activates transcriptional programs of lipid metabolism and ketogenesis at low insulin state. Involved in transcriptional regulation of MUC2 in the intestine. This chain is Hepatocyte nuclear factor 3-beta (Foxa2), found in Mus musculus (Mouse).